The primary structure comprises 589 residues: MEEKVSLKVRVQKLGTSLSNMVMPNIGAFIAWGVLTALFIADGYLPNEQLATVVGPMLTYLLPILIGYTGGYMIHGQRGAVVGAIATVGAITGSSVPMFIGAMVMGPLGGWTIKKFDEKFQEKIRPGFEMLVNNFSAGLVGFALLLLAFYAIGPVVSTLTGAVGNGVEAIVNARLLPMANIIIEPAKVLFLNNALNHGIFTPLGVEQVAQAGKSILFLLEANPGPGLGILLAYAVFGKGSAKSSSWGAMVIHFFGGIHEIYFPYVMMKPTLFLAAMAGGISGTFTFQLLDAGLKSPASPGSIIAIIATAPKGVWPHLNVLLGVLVAAVVSFLVAALILHADKSTEDSLEAAQAATQAAKAQSKGQLVSTSVDAVVSTDSVEKIIFACDAGMGSSAMGASILRDKVKKAGLEIPVSNQAISNLLDTPKTLIVTQEELTPRAKDKSPSAIHVSVDNFLASSRYDEIVASLTGASPIAEIEGDIPTSAPVDSQESDLNHIDAVVVAYGKAQGTATMGCETIRAIFRNKNIRIPVSTAKISELGEFNSKNIMIVTTISLQAEVQQAAPNSQFLIVDSLVTTPEYDKMAARMYK.

Residues 1–25 (MEEKVSLKVRVQKLGTSLSNMVMPN) lie on the Cytoplasmic side of the membrane. The PTS EIIC type-2 domain occupies 14-347 (LGTSLSNMVM…LHADKSTEDS (334 aa)). A helical transmembrane segment spans residues 26 to 47 (IGAFIAWGVLTALFIADGYLPN). Topologically, residues 48 to 51 (EQLA) are extracellular. Residues 52–72 (TVVGPMLTYLLPILIGYTGGY) traverse the membrane as a helical segment. Topologically, residues 73 to 135 (MIHGQRGAVV…PGFEMLVNNF (63 aa)) are cytoplasmic. A helical membrane pass occupies residues 136–157 (SAGLVGFALLLLAFYAIGPVVS). The Extracellular segment spans residues 158–166 (TLTGAVGNG). Residues 167–187 (VEAIVNARLLPMANIIIEPAK) form a helical membrane-spanning segment. Residues 188 to 274 (VLFLNNALNH…VMMKPTLFLA (87 aa)) lie on the Cytoplasmic side of the membrane. The helical transmembrane segment at 275-294 (AMAGGISGTFTFQLLDAGLK) threads the bilayer. The Extracellular portion of the chain corresponds to 295 to 316 (SPASPGSIIAIIATAPKGVWPH). Residues 317 to 338 (LNVLLGVLVAAVVSFLVAALIL) form a helical membrane-spanning segment. Residues 339 to 589 (HADKSTEDSL…YDKMAARMYK (251 aa)) lie on the Cytoplasmic side of the membrane. Positions 381–476 (EKIIFACDAG…SLTGASPIAE (96 aa)) constitute a PTS EIIB type-2 domain. The active-site Phosphocysteine intermediate; for EIIB activity is Cys387. A Phosphocysteine; by EIIA modification is found at Cys387.

Homodimer.

It localises to the cell membrane. It catalyses the reaction D-mannitol(out) + N(pros)-phospho-L-histidyl-[protein] = D-mannitol 1-phosphate(in) + L-histidyl-[protein]. Functionally, the phosphoenolpyruvate-dependent sugar phosphotransferase system (sugar PTS), a major carbohydrate active transport system, catalyzes the phosphorylation of incoming sugar substrates concomitantly with their translocation across the cell membrane. The enzyme II CmtAB PTS system is involved in D-mannitol transport. This Streptococcus pneumoniae serotype 4 (strain ATCC BAA-334 / TIGR4) protein is PTS system mannitol-specific EIICB component (mtlA).